The primary structure comprises 375 residues: Carbamoyl phosphate synthase small chain (375 aa).

The tract at residues Met1 to Glu185 is CPSase. Residues Ser47, Gly237, and Gly239 each coordinate L-glutamine. Residues Lys189–Ser375 enclose the Glutamine amidotransferase type-1 domain. Cys265 serves as the catalytic Nucleophile. Positions 266, 269, 307, 309, and 310 each coordinate L-glutamine. Catalysis depends on residues His349 and Glu351.

This sequence belongs to the CarA family. As to quaternary structure, composed of two chains; the small (or glutamine) chain promotes the hydrolysis of glutamine to ammonia, which is used by the large (or ammonia) chain to synthesize carbamoyl phosphate. Tetramer of heterodimers (alpha,beta)4.

It catalyses the reaction hydrogencarbonate + L-glutamine + 2 ATP + H2O = carbamoyl phosphate + L-glutamate + 2 ADP + phosphate + 2 H(+). The catalysed reaction is L-glutamine + H2O = L-glutamate + NH4(+). Its pathway is amino-acid biosynthesis; L-arginine biosynthesis; carbamoyl phosphate from bicarbonate: step 1/1. The protein operates within pyrimidine metabolism; UMP biosynthesis via de novo pathway; (S)-dihydroorotate from bicarbonate: step 1/3. Its function is as follows. Small subunit of the glutamine-dependent carbamoyl phosphate synthetase (CPSase). CPSase catalyzes the formation of carbamoyl phosphate from the ammonia moiety of glutamine, carbonate, and phosphate donated by ATP, constituting the first step of 2 biosynthetic pathways, one leading to arginine and/or urea and the other to pyrimidine nucleotides. The small subunit (glutamine amidotransferase) binds and cleaves glutamine to supply the large subunit with the substrate ammonia. The polypeptide is Carbamoyl phosphate synthase small chain (Xanthomonas campestris pv. campestris (strain ATCC 33913 / DSM 3586 / NCPPB 528 / LMG 568 / P 25)).